We begin with the raw amino-acid sequence, 156 residues long: Ribosomal RNA large subunit methyltransferase H (156 aa).

S-adenosyl-L-methionine is bound by residues leucine 73, glycine 104, and 123–128 (IGPLTL).

It belongs to the RNA methyltransferase RlmH family. As to quaternary structure, homodimer.

The protein resides in the cytoplasm. It carries out the reaction pseudouridine(1915) in 23S rRNA + S-adenosyl-L-methionine = N(3)-methylpseudouridine(1915) in 23S rRNA + S-adenosyl-L-homocysteine + H(+). Specifically methylates the pseudouridine at position 1915 (m3Psi1915) in 23S rRNA. This Xanthomonas axonopodis pv. citri (strain 306) protein is Ribosomal RNA large subunit methyltransferase H.